We begin with the raw amino-acid sequence, 1037 residues long: Tyrosine-protein kinase-like otk (1037 aa).

The N-terminal stretch at 1–22 (MAALRISVWILVQALMMALVSS) is a signal peptide. Asn-23 and Asn-39 each carry an N-linked (GlcNAc...) asparagine glycan. The Extracellular portion of the chain corresponds to 23–582 (NSSHFLQLPQ…GGDGFLVTRA (560 aa)). 5 consecutive Ig-like C2-type domains span residues 25 to 115 (SHFL…AKLS), 114 to 200 (LSVI…RVMS), 252 to 366 (PEDL…APIN), 369 to 464 (PGTL…VAIN), and 469 to 559 (PKFS…VQLV). 4 cysteine pairs are disulfide-bonded: Cys-46/Cys-96, Cys-138/Cys-189, Cys-277/Cys-355, and Cys-400/Cys-448. 7 N-linked (GlcNAc...) asparagine glycosylation sites follow: Asn-337, Asn-418, Asn-430, Asn-445, Asn-458, Asn-513, and Asn-525. A disulfide bridge connects residues Cys-491 and Cys-543. Residues 583–603 (VLITMTVALAYIVLVVGLMLW) traverse the membrane as a helical segment. Residues 604–1037 (CRYRRQARKA…LSKAMQSLEK (434 aa)) lie on the Cytoplasmic side of the membrane. Disordered regions lie at residues 618-681 (LSTK…KKSA) and 719-764 (ATGS…KTSM). Over residues 653 to 675 (QSRSKSNGDAQKSDDTACSQQSR) the composition is skewed to polar residues. Position 680 is a phosphoserine (Ser-680). The region spanning 694–1035 (LTELIQIGRG…AALSKAMQSL (342 aa)) is the Protein kinase; inactive domain. Basic and acidic residues predominate over residues 724–735 (SDKDADTEKQHS).

This sequence belongs to the protein kinase superfamily. Tyr protein kinase family. Insulin receptor subfamily. As to quaternary structure, interacts with plexA; component of a receptor complex that mediates the repulsive signaling in response to Semaphorin ligands.

It is found in the cell membrane. Acts as a calcium-dependent, homophilic cell adhesion molecule that regulates neural recognition during the development of the nervous system. Component of the repulsive Plexin signaling response to regulate motor axon guidance at the embryonic stage. Also component of a receptor complex that is required in the adult visual system to innervate the lamina layer; specific targeting of R1-R6 axons. The protein is Tyrosine-protein kinase-like otk of Drosophila ananassae (Fruit fly).